A 53-amino-acid polypeptide reads, in one-letter code: 20 kDa chaperonin (53 aa).

2 cpn-10 domain regions span residues 1–10 and 11–53; these read YTSIKPLGDR and VAEA…KITP.

It belongs to the GroES chaperonin family. As to quaternary structure, forms stable complexes with cpn60 in the presence of ATP. Homotetramer.

It is found in the plastid. Its subcellular location is the chloroplast. Seems to function only as a co-chaperone, along with cpn60, and in certain cases is essential for the discharge of biologically active proteins from cpn60. This Populus euphratica (Euphrates poplar) protein is 20 kDa chaperonin.